The chain runs to 199 residues: Recombination protein RecR (199 aa).

Residues 58–73 form a C4-type zinc finger; it reads CVNCGNIGTGDLCEIC. Residues 81–176 enclose the Toprim domain; it reads GEICVVEDVA…TLSSLAQGVP (96 aa).

It belongs to the RecR family.

In terms of biological role, may play a role in DNA repair. It seems to be involved in an RecBC-independent recombinational process of DNA repair. It may act with RecF and RecO. This Jannaschia sp. (strain CCS1) protein is Recombination protein RecR.